A 310-amino-acid polypeptide reads, in one-letter code: tRNA dimethylallyltransferase (310 aa).

13 to 20 (GPTASGKT) contacts ATP. Residue 15 to 20 (TASGKT) coordinates substrate. Interaction with substrate tRNA regions lie at residues 38 to 41 (DSAL), 162 to 166 (QRLSR), 243 to 248 (RCVGYR), and 276 to 283 (KRQITWLR).

Belongs to the IPP transferase family. Monomer. Mg(2+) is required as a cofactor.

It catalyses the reaction adenosine(37) in tRNA + dimethylallyl diphosphate = N(6)-dimethylallyladenosine(37) in tRNA + diphosphate. In terms of biological role, catalyzes the transfer of a dimethylallyl group onto the adenine at position 37 in tRNAs that read codons beginning with uridine, leading to the formation of N6-(dimethylallyl)adenosine (i(6)A). This chain is tRNA dimethylallyltransferase, found in Vibrio atlanticus (strain LGP32) (Vibrio splendidus (strain Mel32)).